The sequence spans 103 residues: Small ribosomal subunit protein uS10 (103 aa).

Belongs to the universal ribosomal protein uS10 family. As to quaternary structure, part of the 30S ribosomal subunit.

In terms of biological role, involved in the binding of tRNA to the ribosomes. The protein is Small ribosomal subunit protein uS10 of Blochmanniella pennsylvanica (strain BPEN).